The primary structure comprises 422 residues: Interleukin-11 receptor subunit alpha (422 aa).

A signal peptide spans 1-22 (MSSSCSGLSRVLVAVATALVSA). Topologically, residues 24–370 (SPCPQAWGPP…DSVEQVAVLA (347 aa)) are extracellular. The Ig-like C2-type domain maps to 27 to 110 (PQAWGPPGVQ…LGGTVTLQLG (84 aa)). 3 cysteine pairs are disulfide-bonded: C48–C94, C120–C130, and C170–C180. Fibronectin type-III domains are found at residues 112 to 219 (PPAR…LRPD) and 220 to 317 (PPQG…TPST). An N-linked (GlcNAc...) asparagine glycan is attached at N127. A glycan (N-linked (GlcNAc...) asparagine) is linked at N194. Residues 304–308 (WSTWS) carry the WSXWS motif motif. Residues 335-355 (EVEPQVDSPAPPRPSLQPHPR) are disordered. Residues 371–391 (SLGILSFLGLVAGALALGLWL) traverse the membrane as a helical segment. The Cytoplasmic portion of the chain corresponds to 392-422 (RLRRGGKDGSPKPGFLASVIPVDRRPGAPNL). The tract at residues 398-422 (KDGSPKPGFLASVIPVDRRPGAPNL) is disordered. Over residues 413-422 (VDRRPGAPNL) the composition is skewed to basic and acidic residues.

This sequence belongs to the type I cytokine receptor family. Type 3 subfamily. In terms of assembly, on IL11 binding, forms a multimer complex with IL6ST/gp130. A short soluble form is also released from the membrane by proteolysis. The sIL11RA is formed either by limited proteolysis of membrane-bound receptors, a process referred to as ectodomain shedding, or directly secreted from the cells after alternative mRNA splicing. mIL11RA is cleaved by the proteases ADAM10, ELANE and PRTN3. Expressed in a number of cell lines, including the myelogenous leukemia cell line K-562, the megakaryocytic leukemia cell line M-07e, the erythroleukemia cell line TF-1, and the osteosarcoma cell lines, MG-63 and SaOS-2. Also expressed in normal and malignant prostate epithelial cell lines. Expression levels are increased in prostate carcinoma.

The protein resides in the membrane. It is found in the secreted. In terms of biological role, receptor for interleukin-11 (IL11). The receptor systems for IL6, LIF, OSM, CNTF, IL11 and CT1 can utilize IL6ST for initiating signal transmission. The IL11/IL11RA/IL6ST complex may be involved in the control of proliferation and/or differentiation of skeletogenic progenitor or other mesenchymal cells. Essential for the normal development of craniofacial bones and teeth. Restricts suture fusion and tooth number. Soluble form of IL11 receptor (sIL11RA) that acts as an agonist of IL11 activity. The IL11:sIL11RA complex binds to IL6ST/gp130 on cell surfaces and induces signaling also on cells that do not express membrane-bound IL11RA in a process called IL11 trans-signaling. The protein is Interleukin-11 receptor subunit alpha of Homo sapiens (Human).